We begin with the raw amino-acid sequence, 316 residues long: Transaldolase (316 aa).

The active-site Schiff-base intermediate with substrate is K132.

The protein belongs to the transaldolase family. Type 1 subfamily. Homodimer.

It localises to the cytoplasm. It carries out the reaction D-sedoheptulose 7-phosphate + D-glyceraldehyde 3-phosphate = D-erythrose 4-phosphate + beta-D-fructose 6-phosphate. Its pathway is carbohydrate degradation; pentose phosphate pathway; D-glyceraldehyde 3-phosphate and beta-D-fructose 6-phosphate from D-ribose 5-phosphate and D-xylulose 5-phosphate (non-oxidative stage): step 2/3. In terms of biological role, transaldolase is important for the balance of metabolites in the pentose-phosphate pathway. The sequence is that of Transaldolase from Methylobacillus flagellatus (strain ATCC 51484 / DSM 6875 / VKM B-1610 / KT).